A 1072-amino-acid chain; its full sequence is DNA-directed RNA polymerase subunit beta (1072 aa).

The protein belongs to the RNA polymerase beta chain family. In plastids the minimal PEP RNA polymerase catalytic core is composed of four subunits: alpha, beta, beta', and beta''. When a (nuclear-encoded) sigma factor is associated with the core the holoenzyme is formed, which can initiate transcription.

The protein localises to the plastid. It localises to the chloroplast. The enzyme catalyses RNA(n) + a ribonucleoside 5'-triphosphate = RNA(n+1) + diphosphate. Functionally, DNA-dependent RNA polymerase catalyzes the transcription of DNA into RNA using the four ribonucleoside triphosphates as substrates. This chain is DNA-directed RNA polymerase subunit beta, found in Arabis hirsuta (Hairy rock-cress).